The primary structure comprises 153 residues: Aspartate carbamoyltransferase regulatory chain (153 aa).

4 residues coordinate Zn(2+): Cys109, Cys114, Cys138, and Cys141.

This sequence belongs to the PyrI family. In terms of assembly, contains catalytic and regulatory chains. Requires Zn(2+) as cofactor.

Functionally, involved in allosteric regulation of aspartate carbamoyltransferase. The sequence is that of Aspartate carbamoyltransferase regulatory chain from Salmonella arizonae (strain ATCC BAA-731 / CDC346-86 / RSK2980).